The sequence spans 153 residues: UPF0756 membrane protein NT01CX_1209 (153 aa).

Helical transmembrane passes span 5–25, 45–65, 83–103, and 113–133; these read IILLILMFLSFISKNKSLGIA, ENHFMNLGMTFLMIWMLIPII, IVCFLCGAIVAVLASKGVGFL, and IILGSIVGVSLLGGVPVGPLI.

The protein belongs to the UPF0756 family.

It localises to the cell membrane. This Clostridium novyi (strain NT) protein is UPF0756 membrane protein NT01CX_1209.